The primary structure comprises 137 residues: Large ribosomal subunit protein uL16 (137 aa).

This sequence belongs to the universal ribosomal protein uL16 family. As to quaternary structure, part of the 50S ribosomal subunit.

In terms of biological role, binds 23S rRNA and is also seen to make contacts with the A and possibly P site tRNAs. In Hydrogenovibrio crunogenus (strain DSM 25203 / XCL-2) (Thiomicrospira crunogena), this protein is Large ribosomal subunit protein uL16.